The following is a 196-amino-acid chain: Imidazole glycerol phosphate synthase subunit HisH (196 aa).

Positions 2–196 constitute a Glutamine amidotransferase type-1 domain; the sequence is NVVIVDTECA…LKRFLELTLC (195 aa). The active-site Nucleophile is the C77. Residues H175 and E177 contribute to the active site.

In terms of assembly, heterodimer of HisH and HisF.

It is found in the cytoplasm. It carries out the reaction 5-[(5-phospho-1-deoxy-D-ribulos-1-ylimino)methylamino]-1-(5-phospho-beta-D-ribosyl)imidazole-4-carboxamide + L-glutamine = D-erythro-1-(imidazol-4-yl)glycerol 3-phosphate + 5-amino-1-(5-phospho-beta-D-ribosyl)imidazole-4-carboxamide + L-glutamate + H(+). It catalyses the reaction L-glutamine + H2O = L-glutamate + NH4(+). Its pathway is amino-acid biosynthesis; L-histidine biosynthesis; L-histidine from 5-phospho-alpha-D-ribose 1-diphosphate: step 5/9. In terms of biological role, IGPS catalyzes the conversion of PRFAR and glutamine to IGP, AICAR and glutamate. The HisH subunit catalyzes the hydrolysis of glutamine to glutamate and ammonia as part of the synthesis of IGP and AICAR. The resulting ammonia molecule is channeled to the active site of HisF. The polypeptide is Imidazole glycerol phosphate synthase subunit HisH (Idiomarina loihiensis (strain ATCC BAA-735 / DSM 15497 / L2-TR)).